We begin with the raw amino-acid sequence, 88 residues long: Large ribosomal subunit protein bL31B (88 aa).

This sequence belongs to the bacterial ribosomal protein bL31 family. Type B subfamily. In terms of assembly, part of the 50S ribosomal subunit.

The sequence is that of Large ribosomal subunit protein bL31B from Pasteurella multocida (strain Pm70).